The chain runs to 239 residues: Probable transcriptional regulatory protein BAA_0622 (239 aa).

It belongs to the TACO1 family. YeeN subfamily.

The protein localises to the cytoplasm. This Bacillus anthracis (strain A0248) protein is Probable transcriptional regulatory protein BAA_0622.